The primary structure comprises 403 residues: Myeloid cell surface antigen CD33 (403 aa).

The N-terminal stretch at 1–16 is a signal peptide; it reads MLWPLPLFLLCAGSLA. The Ig-like V-type domain maps to 17 to 120; sequence QDLEFQLVAP…DTGMYFFRVV (104 aa). Residues 18-240 lie on the Extracellular side of the membrane; that stretch reads DLEFQLVAPE…VTRKSGQMRE (223 aa). 3 disulfides stabilise this stretch: Cys36/Cys169, Cys41/Cys100, and Cys163/Cys212. Asn110 carries an N-linked (GlcNAc...) asparagine glycan. An N-acetylneuraminate-binding site is contributed by Arg118. The Ig-like C2-type domain occupies 145–228; it reads PDIIIPGTLE…AGVTVERTIQ (84 aa). A glycan (N-linked (GlcNAc...) asparagine) is linked at Asn160. Asn230 carries an N-linked (GlcNAc...) asparagine glycan. The chain crosses the membrane as a helical span at residues 241-267; sequence LVLVAVGEATVKLLILGLCLVFLIVMF. Residues 268 to 403 lie on the Cytoplasmic side of the membrane; that stretch reads CRRKTTKLSV…MLLCVSLTLS (136 aa).

Belongs to the immunoglobulin superfamily. SIGLEC (sialic acid binding Ig-like lectin) family. As to quaternary structure, homodimer; disulfide-linked. Interacts with PTPN6/SHP-1 and PTPN11/SHP-2 upon phosphorylation. Interacts with C1QA (via C-terminus); this interaction activates CD33 inhibitory motifs. In terms of processing, glycosylated. Post-translationally, phosphorylation is involved in binding to PTPN6 and PTPN11. In terms of tissue distribution, expressed on myeloid precursors in the bone marrow. In the peripheral blood, mostly expressed on granulocytes.

The protein resides in the cell membrane. Functionally, sialic-acid-binding immunoglobulin-like lectin (Siglec) that plays a role in mediating cell-cell interactions and in maintaining immune cells in a resting state. Preferentially binds sialic acid to the short O-linked glycans of certain mucins. This chain is Myeloid cell surface antigen CD33 (Cd33), found in Mus musculus (Mouse).